We begin with the raw amino-acid sequence, 465 residues long: Uronate isomerase (465 aa).

It belongs to the metallo-dependent hydrolases superfamily. Uronate isomerase family.

The enzyme catalyses D-glucuronate = D-fructuronate. The catalysed reaction is aldehydo-D-galacturonate = keto-D-tagaturonate. The protein operates within carbohydrate metabolism; pentose and glucuronate interconversion. The sequence is that of Uronate isomerase from Streptococcus equi subsp. equi (strain 4047).